The primary structure comprises 400 residues: MTSYSYRQSSAMSSFGGLGGGSVRFGPGVAFRAPSIHGGSGGRGVSVSSARFVSSSSSGGYGGGYGGVLTASDGLLAGNEKLTMQNLNDRLASYLDKVRALEAANGELEVKIRDWYQKQGPGPSRDYSHYYTTIQDLRDKILGATIENSRIVLQIDNARLAADDFRTKFETEQALRMSVEADINGLRRVLDELTLARADLEMQIEGLKEELAYLKKNHEEEISTLRGQVGGQVSVEVDSAPGTDLAKILSDMRSQYEVMAEQNRKDAEAWFTSRTEELNREVAGHTEQLQMSRSEVTDLRRTLQGLEIELQSQLSMKAALEDTLAETEARFGAQLAHIQALISGIEAQLGDVRADSERQNQEYQRLMDIKSRLEQEIATYRSLLEGQEDHYSNLSASKVL.

The interval 1 to 79 (MTSYSYRQSS…TASDGLLAGN (79 aa)) is head. Residue Arg-7 is modified to Omega-N-methylarginine. Phosphoserine occurs at positions 14 and 22. Position 24 is an asymmetric dimethylarginine; alternate (Arg-24). Omega-N-methylarginine; alternate is present on Arg-24. Residue Arg-32 is modified to Omega-N-methylarginine. Phosphoserine is present on residues Ser-35 and Ser-40. An omega-N-methylarginine mark is found at Arg-43 and Arg-51. Ser-57 and Ser-72 each carry phosphoserine. The tract at residues 80 to 115 (EKLTMQNLNDRLASYLDKVRALEAANGELEVKIRDW) is coil 1A. The IF rod domain occupies 80–391 (EKLTMQNLND…SLLEGQEDHY (312 aa)). Residues 116 to 133 (YQKQGPGPSRDYSHYYTT) are linker 1. Residues 134–225 (IQDLRDKILG…KNHEEEISTL (92 aa)) form a coil 1B region. Residues 226–248 (RGQVGGQVSVEVDSAPGTDLAKI) are linker 12. Residues 244–390 (DLAKILSDMR…RSLLEGQEDH (147 aa)) form a necessary for interaction with PNN region. Positions 249-387 (LSDMRSQYEV…ATYRSLLEGQ (139 aa)) are coil 2. Thr-323 bears the Phosphothreonine mark. Residues 388 to 400 (EDHYSNLSASKVL) are rod-like helical tail. A Phosphotyrosine modification is found at Tyr-391. Ser-395 is modified (phosphoserine).

This sequence belongs to the intermediate filament family. In terms of assembly, heterotetramer of two type I and two type II keratins. Interacts with PNN and the actin-binding domain of DMD.

Its function is as follows. Involved in the organization of myofibers. Together with KRT8, helps to link the contractile apparatus to dystrophin at the costameres of striated muscle. The protein is Keratin, type I cytoskeletal 19 of Pongo abelii (Sumatran orangutan).